We begin with the raw amino-acid sequence, 458 residues long: NADH-quinone oxidoreductase subunit N (458 aa).

13 consecutive transmembrane segments (helical) span residues 3–23 (QYLF…LLFL), 29–49 (FGLI…TCTS), 64–84 (QNVK…AIAV), 92–112 (FSVL…SSTL), 147–167 (TLLG…IFVV), 188–208 (ILLF…HAWI), 222–242 (FFAV…ISNL), 265–285 (NILF…AFGQ), 291–311 (FIGF…SNSA), 320–340 (IAYA…VLML), 358–378 (VALA…FIGF), 394–414 (IPTA…YARI), and 437–457 (LLTS…VLLI).

This sequence belongs to the complex I subunit 2 family. NDH-1 is composed of 14 different subunits. Subunits NuoA, H, J, K, L, M, N constitute the membrane sector of the complex.

It is found in the cell inner membrane. It catalyses the reaction a quinone + NADH + 5 H(+)(in) = a quinol + NAD(+) + 4 H(+)(out). Its function is as follows. NDH-1 shuttles electrons from NADH, via FMN and iron-sulfur (Fe-S) centers, to quinones in the respiratory chain. The immediate electron acceptor for the enzyme in this species is believed to be ubiquinone. Couples the redox reaction to proton translocation (for every two electrons transferred, four hydrogen ions are translocated across the cytoplasmic membrane), and thus conserves the redox energy in a proton gradient. The sequence is that of NADH-quinone oxidoreductase subunit N from Neorickettsia risticii (strain Illinois).